A 58-amino-acid chain; its full sequence is Photosystem II reaction center protein K (58 aa).

Positions 1 to 21 (MLNMISTFFDSSSNFSEAFLA) are excised as a propeptide. Residues 29 to 49 (IFDPIVDVMPIIPVFFLLLAF) form a helical membrane-spanning segment.

This sequence belongs to the PsbK family. PSII is composed of 1 copy each of membrane proteins PsbA, PsbB, PsbC, PsbD, PsbE, PsbF, PsbH, PsbI, PsbJ, PsbK, PsbL, PsbM, PsbT, PsbX, PsbY, PsbZ, Psb30/Ycf12, at least 3 peripheral proteins of the oxygen-evolving complex and a large number of cofactors. It forms dimeric complexes.

It localises to the plastid. Its subcellular location is the chloroplast thylakoid membrane. Its function is as follows. One of the components of the core complex of photosystem II (PSII). PSII is a light-driven water:plastoquinone oxidoreductase that uses light energy to abstract electrons from H(2)O, generating O(2) and a proton gradient subsequently used for ATP formation. It consists of a core antenna complex that captures photons, and an electron transfer chain that converts photonic excitation into a charge separation. The protein is Photosystem II reaction center protein K of Chaetosphaeridium globosum (Charophycean green alga).